A 266-amino-acid polypeptide reads, in one-letter code: Thymidylate synthase (266 aa).

Arginine 24 is a binding site for dUMP. Histidine 54 serves as a coordination point for (6R)-5,10-methylene-5,6,7,8-tetrahydrofolate. 129–130 is a dUMP binding site; sequence RR. Cysteine 149 (nucleophile) is an active-site residue. DUMP is bound by residues 169–172, asparagine 180, and 210–212; these read RSAD and HIY. Aspartate 172 is a (6R)-5,10-methylene-5,6,7,8-tetrahydrofolate binding site. Alanine 265 contacts (6R)-5,10-methylene-5,6,7,8-tetrahydrofolate.

It belongs to the thymidylate synthase family. Bacterial-type ThyA subfamily. Homodimer.

The protein resides in the cytoplasm. The catalysed reaction is dUMP + (6R)-5,10-methylene-5,6,7,8-tetrahydrofolate = 7,8-dihydrofolate + dTMP. It functions in the pathway pyrimidine metabolism; dTTP biosynthesis. Functionally, catalyzes the reductive methylation of 2'-deoxyuridine-5'-monophosphate (dUMP) to 2'-deoxythymidine-5'-monophosphate (dTMP) while utilizing 5,10-methylenetetrahydrofolate (mTHF) as the methyl donor and reductant in the reaction, yielding dihydrofolate (DHF) as a by-product. This enzymatic reaction provides an intracellular de novo source of dTMP, an essential precursor for DNA biosynthesis. This Mycobacterium ulcerans (strain Agy99) protein is Thymidylate synthase.